The sequence spans 288 residues: ATP synthase gamma chain (288 aa).

The protein belongs to the ATPase gamma chain family. As to quaternary structure, F-type ATPases have 2 components, CF(1) - the catalytic core - and CF(0) - the membrane proton channel. CF(1) has five subunits: alpha(3), beta(3), gamma(1), delta(1), epsilon(1). CF(0) has three main subunits: a, b and c.

Its subcellular location is the cell inner membrane. Produces ATP from ADP in the presence of a proton gradient across the membrane. The gamma chain is believed to be important in regulating ATPase activity and the flow of protons through the CF(0) complex. The chain is ATP synthase gamma chain from Rickettsia akari (strain Hartford).